The primary structure comprises 33 residues: Dermaseptin-H8 (33 aa).

At Leu33 the chain carries Leucine amide.

In terms of tissue distribution, expressed by the skin glands.

The protein localises to the secreted. Its function is as follows. Has antimicrobial activity. The sequence is that of Dermaseptin-H8 from Pithecopus hypochondrialis (Orange-legged leaf frog).